The sequence spans 248 residues: Granulin (248 aa).

The protein belongs to the polyhedrin family.

In terms of biological role, component of the virus occlusion bodies, which are large proteinaceous structures, that protect the virus from the outside environment for extended periods until they are ingested by insect larvae. This Choristoneura fumiferana (Spruce budworm moth) protein is Granulin.